The following is a 179-amino-acid chain: MTDNNIENNEEEIRKAPSANDREELTELKAQIEELKDKLIRTTAEIDNTRKRLEKARDEAKDYAIATFAKELLNVSDNLARALAHTPAKLDVEVINIIEGVQMTKDELDKIFHKHHIEEIKPEIGSMFDYNLHNAISQIDNTKYAPNSVITVMQSGYKIKDRLLRPATVQVTKKPKQEE.

The tract at residues Met-1 to Arg-22 is disordered. The segment covering Glu-11–Arg-22 has biased composition (basic and acidic residues).

It belongs to the GrpE family. Homodimer.

It is found in the cytoplasm. Functionally, participates actively in the response to hyperosmotic and heat shock by preventing the aggregation of stress-denatured proteins, in association with DnaK and GrpE. It is the nucleotide exchange factor for DnaK and may function as a thermosensor. Unfolded proteins bind initially to DnaJ; upon interaction with the DnaJ-bound protein, DnaK hydrolyzes its bound ATP, resulting in the formation of a stable complex. GrpE releases ADP from DnaK; ATP binding to DnaK triggers the release of the substrate protein, thus completing the reaction cycle. Several rounds of ATP-dependent interactions between DnaJ, DnaK and GrpE are required for fully efficient folding. This Rickettsia canadensis (strain McKiel) protein is Protein GrpE.